The sequence spans 313 residues: Transcription factor MafB (313 aa).

2 disordered regions span residues Q51 to T77 and M151 to R197. Positions S55–P76 are enriched in low complexity. Residues P154–H166 are compositionally biased toward basic residues. Residues Q167 to S192 show a composition bias toward low complexity. The interval R225–K250 is basic motif. The region spanning R225 to L288 is the bZIP domain. A leucine-zipper region spans residues L253–L274. The interval N292–M313 is disordered.

It belongs to the bZIP family. Maf subfamily. Homodimer or heterodimer with other bHLH-Zip transcription factors. Binds DNA as a homodimer or a heterodimer.

It is found in the nucleus. Functionally, acts as a transcriptional activator or repressor. Implicated in the regulation of cell-type specific gene expression and play a role in inductive events during lens development. The protein is Transcription factor MafB (mafb) of Xenopus laevis (African clawed frog).